Here is an 800-residue protein sequence, read N- to C-terminus: DNA topoisomerase 4 subunit A (800 aa).

In terms of domain architecture, Topo IIA-type catalytic spans Leu31–Glu495. Tyr119 acts as the O-(5'-phospho-DNA)-tyrosine intermediate in catalysis.

The protein belongs to the type II topoisomerase GyrA/ParC subunit family. ParC type 2 subfamily. As to quaternary structure, heterotetramer composed of ParC and ParE.

The protein resides in the cell membrane. It carries out the reaction ATP-dependent breakage, passage and rejoining of double-stranded DNA.. Topoisomerase IV is essential for chromosome segregation. It relaxes supercoiled DNA. Performs the decatenation events required during the replication of a circular DNA molecule. The chain is DNA topoisomerase 4 subunit A from Staphylococcus aureus (strain Mu50 / ATCC 700699).